Here is a 1761-residue protein sequence, read N- to C-terminus: Laminin subunit beta-4 (1761 aa).

Positions 1–19 are cleaved as a signal peptide; sequence MQFQLTLFLHLGWLSYSKA. One can recognise a Laminin N-terminal domain in the interval 24-264; that stretch reads NRGACHPTTG…ALYEMIVRGS (241 aa). Residues asparagine 169, asparagine 229, and asparagine 246 are each glycosylated (N-linked (GlcNAc...) asparagine). Intrachain disulfides connect cysteine 265/cysteine 274, cysteine 267/cysteine 295, cysteine 297/cysteine 306, cysteine 309/cysteine 329, cysteine 332/cysteine 341, cysteine 334/cysteine 359, cysteine 362/cysteine 371, cysteine 374/cysteine 392, cysteine 395/cysteine 408, cysteine 397/cysteine 423, cysteine 425/cysteine 434, cysteine 437/cysteine 452, cysteine 455/cysteine 468, cysteine 457/cysteine 475, cysteine 477/cysteine 486, cysteine 489/cysteine 503, cysteine 506/cysteine 518, cysteine 508/cysteine 525, and cysteine 527/cysteine 536. 4 consecutive Laminin EGF-like domains span residues 265–331, 332–394, 395–454, and 455–505; these read CFCN…ACRS, CSCN…ACIP, CECD…GCQP, and CDCN…GCSP. In terms of domain architecture, Laminin EGF-like 5; truncated spans 506 to 552; it reads CDCDIGGAYSNVCSPKNGQCECRPHVTGRSCSEPAPGYFFAPLNFYL. The Laminin IV type B domain occupies 545-763; the sequence is FAPLNFYLYE…LIISMSAKLH (219 aa). 31 cysteine pairs are disulfide-bonded: cysteine 769-cysteine 781, cysteine 771-cysteine 788, cysteine 790-cysteine 799, cysteine 802-cysteine 814, cysteine 817-cysteine 829, cysteine 819-cysteine 836, cysteine 838-cysteine 847, cysteine 850-cysteine 860, cysteine 863-cysteine 872, cysteine 865-cysteine 879, cysteine 882-cysteine 891, cysteine 894-cysteine 908, cysteine 913-cysteine 938, cysteine 940-cysteine 949, cysteine 952-cysteine 967, cysteine 970-cysteine 984, cysteine 972-cysteine 991, cysteine 994-cysteine 1003, cysteine 1006-cysteine 1019, cysteine 1022-cysteine 1043, cysteine 1024-cysteine 1050, cysteine 1052-cysteine 1061, cysteine 1064-cysteine 1077, cysteine 1080-cysteine 1092, cysteine 1082-cysteine 1099, cysteine 1101-cysteine 1110, cysteine 1113-cysteine 1125, cysteine 1128-cysteine 1140, cysteine 1130-cysteine 1147, cysteine 1149-cysteine 1158, and cysteine 1161-cysteine 1172. 8 Laminin EGF-like domains span residues 769 to 816, 817 to 862, 863 to 910, 911 to 969, 970 to 1021, 1022 to 1079, 1080 to 1127, and 1128 to 1174; these read CKCH…GCHP, CHCH…SCHP, CPCN…PCRP, CLCP…PCQP, CACN…TCRR, CSCH…GCQS, CDCD…RCIP, and CDCN…TCLQ. N-linked (GlcNAc...) asparagine glycosylation occurs at asparagine 1016. N-linked (GlcNAc...) asparagine glycosylation occurs at asparagine 1055. Residues 1175 to 1375 form a domain II region; it reads CHLCFDQWDH…PDIQILNEKV (201 aa). Residues asparagine 1223, asparagine 1301, asparagine 1326, asparagine 1333, and asparagine 1354 are each glycosylated (N-linked (GlcNAc...) asparagine). The stretch at 1243–1301 forms a coiled coil; that stretch reads KVKDYHDSVRRQIMQLNEQLKAVYEFQDLKDTIERAKNEADLLLEDLQEEIDLQSSVLN. Positions 1376-1408 are domain alpha; the sequence is CGDPGNVPCVPLPCGGALCTGRKGHRKCRGPGC. Residues 1409–1761 form a domain I region; it reads HGSLTLSTNA…QEKKYARCYS (353 aa). Residues 1416-1480 are a coiled coil; that stretch reads TNALQKAQEA…SDSEEENINL (65 aa). Asparagine 1469, asparagine 1517, asparagine 1587, asparagine 1596, asparagine 1609, and asparagine 1725 each carry an N-linked (GlcNAc...) asparagine glycan. The stretch at 1525-1759 forms a coiled coil; that stretch reads IQKHMQLCED…VEQEKKYARC (235 aa).

As to quaternary structure, laminin is a complex glycoprotein, consisting of three different polypeptide chains (alpha, beta, gamma), which are bound to each other by disulfide bonds into a cross-shaped molecule comprising one long and three short arms with globules at each end.

It is found in the secreted. It localises to the extracellular space. The protein localises to the extracellular matrix. The protein resides in the basement membrane. Functionally, binding to cells via a high affinity receptor, laminin is thought to mediate the attachment, migration and organization of cells into tissues during embryonic development by interacting with other extracellular matrix components. In Homo sapiens (Human), this protein is Laminin subunit beta-4 (LAMB4).